The chain runs to 28 residues: Small spore coat assembly protein A (28 aa).

A helical transmembrane segment spans residues 8–28; sequence GFALLVVLFILLIIVGAAYIY.

This sequence belongs to the SscA family.

It localises to the spore coat. Its subcellular location is the membrane. Its function is as follows. Spore protein involved in the assembly of several components of the spore coat, including CotB, CotG and CotH, and in spore germination. The polypeptide is Small spore coat assembly protein A (Bacillus subtilis (strain 168)).